Here is a 64-residue protein sequence, read N- to C-terminus: MPKMKSHTGMGKRVRVTGKGKIVKQQAGLRHNLEKKSSTRTRRLTGLVEVAKPDVKRIKKLLGR.

Residues Met-1 to Ile-22 are compositionally biased toward basic residues. Residues Met-1–Gly-28 form a disordered region.

The protein belongs to the bacterial ribosomal protein bL35 family.

The protein is Large ribosomal subunit protein bL35 of Salinispora tropica (strain ATCC BAA-916 / DSM 44818 / JCM 13857 / NBRC 105044 / CNB-440).